The following is a 1989-amino-acid chain: Zinc finger C3H1 domain-containing protein (1989 aa).

Disordered stretches follow at residues Met-1–Phe-133, Gly-148–Glu-218, Ser-251–Lys-290, and Leu-310–Asp-365. An N-acetylalanine modification is found at Ala-2. Residues Ser-15, Ser-28, and Ser-34 each carry the phosphoserine modification. Acidic residues predominate over residues Gly-20 to Asn-32. Residues Asn-33 to Ser-44 show a composition bias toward low complexity. Residues Arg-62 to Ser-72 are compositionally biased toward gly residues. Composition is skewed to low complexity over residues Pro-114 to Ser-132, Gly-183 to Glu-192, and Lys-201 to Lys-210. Ser-128 is subject to Phosphoserine. The stretch at Asn-219–Glu-259 forms a coiled coil. Ser-251 is subject to Phosphoserine. Residues Ser-251–Lys-262 are compositionally biased toward basic and acidic residues. Residues Phe-266–Lys-279 show a composition bias toward polar residues. Over residues Asp-280–Lys-290 the composition is skewed to basic and acidic residues. The span at Lys-330–Leu-340 shows a compositional bias: polar residues. Phosphoserine is present on residues Ser-352 and Ser-383. A coiled-coil region spans residues Ser-358–Lys-389. Disordered regions lie at residues Lys-385–Ser-671 and Leu-711–Leu-770. Positions Gln-392–Thr-402 are enriched in basic and acidic residues. Residues Ala-430 to Lys-440 show a composition bias toward basic residues. Residues Arg-432 to Arg-487 are a coiled coil. Basic and acidic residues-rich tracts occupy residues Gln-444–Ser-479 and Lys-501–Pro-515. Residues Asn-527 to Ser-537 show a composition bias toward acidic residues. Low complexity predominate over residues Val-574–Pro-583. The span at Pro-594–Pro-616 shows a compositional bias: pro residues. Polar residues predominate over residues Thr-647–Ser-671. Phosphoserine is present on residues Ser-662, Ser-714, Ser-717, and Ser-719. Residues Pro-755–Leu-770 show a composition bias toward basic and acidic residues. Phosphothreonine is present on Thr-766. Ser-805 and Ser-809 each carry phosphoserine. Residues Leu-847–Leu-909 are a coiled coil. Phosphoserine is present on residues Ser-948, Ser-949, and Ser-953. Residues Glu-965–Leu-989 are a coiled coil. Phosphoserine occurs at positions 998 and 1046. A C3H1-type zinc finger spans residues Phe-1185–Asp-1206. Ser-1301, Ser-1303, and Ser-1304 each carry phosphoserine. TPR repeat units lie at residues Val-1361 to Asn-1400, Pro-1401 to Tyr-1434, Trp-1438 to Asn-1471, Leu-1478 to Gly-1511, Leu-1602 to Asn-1635, Cys-1636 to Asn-1669, and Pro-1745 to Cys-1778.

Component of the poly(A) tail exosome targeting (PAXT) complex made of accessory factors, such as PABPN1, ZFC3H1 and MTREX, and which directs a subset of long and polyadenylated poly(A) RNAs for exosomal degradation. Co-localizes with component of the CBC-ARS2 (CBCA) complex. Binds to RNA exosome components. Interacts with NCBP1/CBP80, ZC3H18, MTREX and PABPN1 in a RNase-insensitive manner, and with PABPC4, PABPC1 and ZC3H14 in a RNase-sensitive manner.

Its subcellular location is the nucleus. Functionally, subunit of the trimeric poly(A) tail exosome targeting (PAXT) complex, a complex that directs a subset of long and polyadenylated poly(A) RNAs for exosomal degradation. The RNA exosome is fundamental for the degradation of RNA in eukaryotic nuclei. Substrate targeting is facilitated by its cofactor MTREX, which links to RNA-binding protein adapters. In Homo sapiens (Human), this protein is Zinc finger C3H1 domain-containing protein (ZFC3H1).